The sequence spans 203 residues: MSRYTGPSWKQSRRLGLSLTGTGKELARRNYVPGQHGPNNRSKLSEYGLQLAEKQKLRFSYGLGEKQFRNLFVQATKAKEGTLGFNFMVLLERRLDNVVYRLGLATTRRQARQFVNHGHILVDGKRVDIPSYRVTPGQVISVREKSMKVPAILEAVEATLGRPAFVSFDAEKLEGSLTRLPERDEINPEINEALVVEFYNKML.

Positions 93–156 constitute an S4 RNA-binding domain; that stretch reads RRLDNVVYRL…MKVPAILEAV (64 aa).

The protein belongs to the universal ribosomal protein uS4 family. Part of the 30S ribosomal subunit. Contacts protein S5. The interaction surface between S4 and S5 is involved in control of translational fidelity.

In terms of biological role, one of the primary rRNA binding proteins, it binds directly to 16S rRNA where it nucleates assembly of the body of the 30S subunit. Its function is as follows. With S5 and S12 plays an important role in translational accuracy. In Streptococcus agalactiae serotype Ia (strain ATCC 27591 / A909 / CDC SS700), this protein is Small ribosomal subunit protein uS4.